Consider the following 77-residue polypeptide: Conotoxin Cl6.15 (77 aa).

The first 19 residues, 1 to 19 (MKLSVKFLLFLMILPLIAG), serve as a signal peptide directing secretion. Positions 20-37 (EDMSDNDAPKSVDVQRNV) are excised as a propeptide. Cystine bridges form between C49–C61, C55–C66, and C60–C75.

This sequence belongs to the conotoxin I1 superfamily. Expressed by the venom duct.

The protein resides in the secreted. In Californiconus californicus (California cone), this protein is Conotoxin Cl6.15.